The following is a 450-amino-acid chain: UDP-N-acetylmuramoylalanine--D-glutamate ligase (450 aa).

118–124 (GSNAKST) is a binding site for ATP.

The protein belongs to the MurCDEF family.

Its subcellular location is the cytoplasm. It carries out the reaction UDP-N-acetyl-alpha-D-muramoyl-L-alanine + D-glutamate + ATP = UDP-N-acetyl-alpha-D-muramoyl-L-alanyl-D-glutamate + ADP + phosphate + H(+). The protein operates within cell wall biogenesis; peptidoglycan biosynthesis. Its function is as follows. Cell wall formation. Catalyzes the addition of glutamate to the nucleotide precursor UDP-N-acetylmuramoyl-L-alanine (UMA). This chain is UDP-N-acetylmuramoylalanine--D-glutamate ligase, found in Pseudomonas putida (strain ATCC 47054 / DSM 6125 / CFBP 8728 / NCIMB 11950 / KT2440).